Here is a 130-residue protein sequence, read N- to C-terminus: Small ribosomal subunit protein uS9 (130 aa).

The protein belongs to the universal ribosomal protein uS9 family.

This is Small ribosomal subunit protein uS9 from Clostridioides difficile (strain 630) (Peptoclostridium difficile).